Reading from the N-terminus, the 579-residue chain is Golvesin (579 aa).

The tract at residues 1-75 (MTSVNEHSLL…NNNNNNNNNN (75 aa)) is required for targeting to the plasma membrane. The interval 1–79 (MTSVNEHSLL…NNNNNNSNTG (79 aa)) is disordered. The Lumenal segment spans residues 1-94 (MTSVNEHSLL…KKKKWNFRKK (94 aa)). The segment covering 11–77 (INNNENNDNN…NNNNNNNNSN (67 aa)) has biased composition (low complexity). Residues 95 to 115 (ILPMIVILIITAIVVCLVVFS) form a helical; Signal-anchor for type III membrane protein membrane-spanning segment. The interval 95–118 (ILPMIVILIITAIVVCLVVFSLPF) is required for membrane targeting. The Cytoplasmic portion of the chain corresponds to 116–578 (LPFDSSNTIY…SNDFVIAESP (463 aa)). The segment at 559-579 (WPSSKGIPGFSNDFVIAESPE) is required for transfer to endosomes and contractile vacuoles; the protein is trapped in the Golgi.

The protein localises to the contractile vacuole membrane. It localises to the endosome membrane. Its subcellular location is the golgi apparatus membrane. This Dictyostelium discoideum (Social amoeba) protein is Golvesin (gol).